We begin with the raw amino-acid sequence, 520 residues long: METWSVDQVCKWLVEKNLGELVPRFQEEEVSGATLLALNDRMVQQLVKKIGHQAVLMDFIKKYKQGNQELKPTGGPADTSTLTPAQAAPEHEQNPSPTSHGDQTSLYPAVLDNRLIDQRVLKQRRNVKHVLARHKALQWTKSYILPEFPYDVKCMLVEQKRPDHSMRIRIIEFLQADMTKYLEGSLYPTTQQYNDVVNALLQAHPFLDEDGCGFFLWKRALKDRFKYIRRPIEDDEQVMRNKCKFGHRRGQTRKSLADIQSNEIKIVQIKEESAHLDSEVDEHISWFQQEYMKTERDWREVDKRMSQTLEIRRKMIGGQTPLKDILKMFPFLKCPYQMFREVQILTKTDIYKKTRHILESYSENILTAFSVLDNPINTALQEKMKHYTDEGVLKSPEVLKNMKMTATCLLLPHVFGDEPSLFVVVNGKVHVSTPVLEVKNPFHINGCEFSLYLNKEKLTKVDDCVTALAALVSAFRVFGIECPRRLSQTFNFLETLIFDMQSPQFPSLKEKEIRSQPPIT.

One can recognise an SAM domain in the interval 4 to 71 (WSVDQVCKWL…KYKQGNQELK (68 aa)). The disordered stretch occupies residues 67-104 (NQELKPTGGPADTSTLTPAQAAPEHEQNPSPTSHGDQT). The segment covering 94–104 (NPSPTSHGDQT) has biased composition (polar residues).

The polypeptide is Sterile alpha motif domain-containing protein 3 (Samd3) (Mus musculus (Mouse)).